A 197-amino-acid chain; its full sequence is Holliday junction branch migration complex subunit RuvA (197 aa).

Positions 1–63 are domain I; the sequence is MFDYIKGQLT…EDAHLLFGFH (63 aa). The segment at 64–142 is domain II; the sequence is TENEKDVFLK…TIPEGGQAQQ (79 aa). Residues 142–146 are flexible linker; the sequence is QMPKA. Positions 147–197 are domain III; that stretch reads KGNQQLDEAIEALLALGYKATELKKIRAFFEGTDDTAEQYIKSALKMLMKG.

It belongs to the RuvA family. As to quaternary structure, homotetramer. Forms an RuvA(8)-RuvB(12)-Holliday junction (HJ) complex. HJ DNA is sandwiched between 2 RuvA tetramers; dsDNA enters through RuvA and exits via RuvB. An RuvB hexamer assembles on each DNA strand where it exits the tetramer. Each RuvB hexamer is contacted by two RuvA subunits (via domain III) on 2 adjacent RuvB subunits; this complex drives branch migration. In the full resolvosome a probable DNA-RuvA(4)-RuvB(12)-RuvC(2) complex forms which resolves the HJ.

Its subcellular location is the cytoplasm. Its function is as follows. The RuvA-RuvB-RuvC complex processes Holliday junction (HJ) DNA during genetic recombination and DNA repair, while the RuvA-RuvB complex plays an important role in the rescue of blocked DNA replication forks via replication fork reversal (RFR). RuvA specifically binds to HJ cruciform DNA, conferring on it an open structure. The RuvB hexamer acts as an ATP-dependent pump, pulling dsDNA into and through the RuvAB complex. HJ branch migration allows RuvC to scan DNA until it finds its consensus sequence, where it cleaves and resolves the cruciform DNA. The polypeptide is Holliday junction branch migration complex subunit RuvA (Streptococcus uberis (strain ATCC BAA-854 / 0140J)).